The primary structure comprises 247 residues: Cytochrome c oxidase subunit 2 (247 aa).

Residues 12–38 are Mitochondrial intermembrane-facing; that stretch reads DVPTPWGLYFQDSSTPNQEGIIELHDN. A helical membrane pass occupies residues 39 to 59; the sequence is IMFYLVLILCTVSWLLFSIVK. The Mitochondrial matrix segment spans residues 60–78; that stretch reads DSSKNPLPHKYLVHGQTIE. Residues 79–101 traverse the membrane as a helical segment; sequence IIWTILPAVVLLIIAFPSFILLY. Residues 102–247 are Mitochondrial intermembrane-facing; the sequence is LCDEVISPAM…KEFLTWLNEQ (146 aa). Cu cation-binding residues include histidine 182, cysteine 217, glutamate 219, cysteine 221, histidine 225, and methionine 228. Glutamate 219 lines the Mg(2+) pocket.

The protein belongs to the cytochrome c oxidase subunit 2 family. As to quaternary structure, component of the cytochrome c oxidase (complex IV, CIV), a multisubunit enzyme composed of a catalytic core of 3 subunits and several supernumerary subunits. The complex exists as a monomer or a dimer and forms supercomplexes (SCs) in the inner mitochondrial membrane with ubiquinol-cytochrome c oxidoreductase (cytochrome b-c1 complex, complex III, CIII). Cu cation is required as a cofactor. In terms of processing, the signal sequence of COX2 is processed by IMP1.

The protein resides in the mitochondrion inner membrane. It catalyses the reaction 4 Fe(II)-[cytochrome c] + O2 + 8 H(+)(in) = 4 Fe(III)-[cytochrome c] + 2 H2O + 4 H(+)(out). Its function is as follows. Component of the cytochrome c oxidase, the last enzyme in the mitochondrial electron transport chain which drives oxidative phosphorylation. The respiratory chain contains 3 multisubunit complexes succinate dehydrogenase (complex II, CII), ubiquinol-cytochrome c oxidoreductase (cytochrome b-c1 complex, complex III, CIII) and cytochrome c oxidase (complex IV, CIV), that cooperate to transfer electrons derived from NADH and succinate to molecular oxygen, creating an electrochemical gradient over the inner membrane that drives transmembrane transport and the ATP synthase. Cytochrome c oxidase is the component of the respiratory chain that catalyzes the reduction of oxygen to water. Electrons originating from reduced cytochrome c in the intermembrane space (IMS) are transferred via the dinuclear copper A center (CU(A)) of subunit 2 and heme A of subunit 1 to the active site in subunit 1, a binuclear center (BNC) formed by heme A3 and copper B (CU(B)). The BNC reduces molecular oxygen to 2 water molecules using 4 electrons from cytochrome c in the IMS and 4 protons from the mitochondrial matrix. This is Cytochrome c oxidase subunit 2 (COX2) from Cyberlindnera mrakii (Yeast).